A 148-amino-acid chain; its full sequence is Probable DNA-directed RNA polymerases I, II, and III subunit RPABC3 (148 aa).

Positions 16 to 40 are non-specific ssDNA binding; sequence DPDGKKFDRVSRYFCDAESFKMELI.

It belongs to the eukaryotic RPB8 RNA polymerase subunit family. In terms of assembly, component of the RNA polymerase I (Pol I), RNA polymerase II (Pol II) and RNA polymerase III (Pol III) complexes consisting of at least 13, 12 and 17 subunits, respectively. Directly interacts with POLR2A.

It localises to the nucleus. Its function is as follows. DNA-dependent RNA polymerase catalyzes the transcription of DNA into RNA using the four ribonucleoside triphosphates as substrates. Common component of RNA polymerases I, II and III which synthesize ribosomal RNA precursors, mRNA precursors and many functional non-coding RNAs, and small RNAs, such as 5S rRNA and tRNAs, respectively. In Caenorhabditis elegans, this protein is Probable DNA-directed RNA polymerases I, II, and III subunit RPABC3 (rpb-8).